The chain runs to 49 residues: Large ribosomal subunit protein bL33B (49 aa).

It belongs to the bacterial ribosomal protein bL33 family.

This is Large ribosomal subunit protein bL33B from Bacillus cytotoxicus (strain DSM 22905 / CIP 110041 / 391-98 / NVH 391-98).